Consider the following 601-residue polypeptide: Glutathione-regulated potassium-efflux system protein KefB (601 aa).

Transmembrane regions (helical) follow at residues 4-24, 29-49, 55-75, 87-107, 115-135, 152-172, 177-197, 207-227, 230-250, 262-282, 284-304, 324-344, and 356-376; these read SDLLTAGVMFLFAAVAAVPLA, IGAVLGYLLAGIAIGPWGLGF, EILHFSELGVVFLMFIIGLEL, IFGVGAAQVMLSAVVLAGLLM, AAVIGGIGLAMSSTAMALQLM, VLLFQDLAVIPALALVPLLAG, HFDWIKVGMKVLAFAGMLIGG, FIADSGVREVFTAATLLLVLG, LFMDALGLSMALGTFIAGVLL, AIDPFKGLLLGLFFISVGMSL, LGVLYTHLLWVAVSVIVLVAV, MQFAGVLSQGGEFAFVLFSTA, and SLLLVTVTLSMMTTPLLMKLV. The RCK N-terminal domain maps to 400 to 519; that stretch reads KPQVIVVGFG…AGVTQFSRET (120 aa).

It belongs to the monovalent cation:proton antiporter 2 (CPA2) transporter (TC 2.A.37) family. KefB subfamily. As to quaternary structure, interacts with the regulatory subunit KefG.

It is found in the cell inner membrane. In terms of biological role, pore-forming subunit of a potassium efflux system that confers protection against electrophiles. Catalyzes K(+)/H(+) antiport. This is Glutathione-regulated potassium-efflux system protein KefB from Citrobacter koseri (strain ATCC BAA-895 / CDC 4225-83 / SGSC4696).